The primary structure comprises 290 residues: Lipid phosphate phosphatase 2 (290 aa).

The next 3 helical transmembrane spans lie at 26–46 (WLIL…EPFH), 69–89 (WAVP…YYFI), and 93–113 (VYDL…TGVI). A glycan (N-linked (GlcNAc...) asparagine) is linked at N142. A run of 3 helical transmembrane segments spans residues 162–182 (SFPS…SLYL), 193–213 (GHVA…LVGV), and 226–246 (VFGG…QFFP).

This sequence belongs to the PA-phosphatase related phosphoesterase family. In terms of tissue distribution, expressed in roots, stems, leaves, buds, flowers and siliques.

It localises to the membrane. With respect to regulation, PA phosphatase activity not inhibited by N-ethylmaleimide. Its function is as follows. May play a general 'housekeeping role' in lipid metabolism. Exhibits both diacylglycerol pyrophosphate (DGPP) phosphatase and phosphatidate (PA) phosphatase activities with no preference for either substrate. May play a role downstream of the ABA signaling pathway during seed germination and in stomatal movement in leaves. The sequence is that of Lipid phosphate phosphatase 2 (LPP2) from Arabidopsis thaliana (Mouse-ear cress).